The primary structure comprises 463 residues: Argininosuccinate lyase (463 aa).

Belongs to the lyase 1 family. Argininosuccinate lyase subfamily.

The protein resides in the cytoplasm. It catalyses the reaction 2-(N(omega)-L-arginino)succinate = fumarate + L-arginine. It participates in amino-acid biosynthesis; L-arginine biosynthesis; L-arginine from L-ornithine and carbamoyl phosphate: step 3/3. This Chlorobaculum parvum (strain DSM 263 / NCIMB 8327) (Chlorobium vibrioforme subsp. thiosulfatophilum) protein is Argininosuccinate lyase.